Consider the following 465-residue polypeptide: Cysteine--tRNA ligase (465 aa).

Cys29 contributes to the Zn(2+) binding site. A 'HIGH' region motif is present at residues 31–41 (PTVYNYIHIGN). Zn(2+)-binding residues include Cys209, His234, and Glu238. The 'KMSKS' region motif lies at 266–270 (KMSKS). Lys269 contributes to the ATP binding site. The residue at position 270 (Ser270) is a Phosphoserine.

Belongs to the class-I aminoacyl-tRNA synthetase family. In terms of assembly, monomer. It depends on Zn(2+) as a cofactor.

Its subcellular location is the cytoplasm. The enzyme catalyses tRNA(Cys) + L-cysteine + ATP = L-cysteinyl-tRNA(Cys) + AMP + diphosphate. This Anoxybacillus flavithermus (strain DSM 21510 / WK1) protein is Cysteine--tRNA ligase.